Reading from the N-terminus, the 289-residue chain is Aquaporin-2 (289 aa).

The tract at residues 1–36 (MSNESNDLEKNISHLDPTGVDNAYIPPEQPETKHSR) is disordered. The Cytoplasmic portion of the chain corresponds to 1–47 (MSNESNDLEKNISHLDPTGVDNAYIPPEQPETKHSRFNIDRDTLRNH). The chain crosses the membrane as a helical span at residues 48-68 (FIAAVGEFCGTFMFLWCAYVI). At 69–90 (CNVANHDVALTTEPEGSHPGQL) the chain is on the extracellular side. A helical transmembrane segment spans residues 91–111 (IMIALGFGFSVMFSIWCFAGV). Residues 112–135 (SGGALNPAVSLSLCLARAISPARC) are Cytoplasmic-facing. Residues 117 to 119 (NPA) carry the NPA 1 motif. The chain crosses the membrane as a helical span at residues 136–156 (VVMWFPQIIAGMAAGGAASAM). Residues 157-175 (TPGKVLFTNALGLGCSRSR) lie on the Extracellular side of the membrane. The helical transmembrane segment at 176–196 (GLFLEMFGTAVLCLTVLMTAV) threads the bilayer. Residues 197–202 (EKRETN) lie on the Cytoplasmic side of the membrane. Residues 203–223 (FMAALPIGISLFMAHMALTGY) form a helical membrane-spanning segment. At 224–247 (TGTGVNPARSLGAAVAARYFPHYH) the chain is on the extracellular side. The NPA 2 signature appears at 229–231 (NPA). A helical membrane pass occupies residues 248 to 268 (WIYWIGPLLGAFLAWSVWQLL). Over 269 to 289 (QILDYTTYVNAEKAAGQKKED) the chain is Cytoplasmic.

Belongs to the MIP/aquaporin (TC 1.A.8) family.

The protein resides in the endoplasmic reticulum membrane. It is found in the cell membrane. Functionally, water channel required to facilitate the transport of water across membranes. Involved in freeze tolerance, osmotolerance and cell flocculation in liquid cultures. Is non-functional in most laboratory strains. This Saccharomyces cerevisiae (Baker's yeast) protein is Aquaporin-2 (AQY2).